The chain runs to 229 residues: Cytochrome c oxidase subunit 2 (229 aa).

Topologically, residues 1–26 are mitochondrial intermembrane; that stretch reads MSTWANLGLQDSASPLMEQLIFFHDH. A helical transmembrane segment spans residues 27 to 48; sequence ALLILVMITVLVGYLMFMLFFN. Residues 49-62 are Mitochondrial matrix-facing; the sequence is SYVNRFLLHGQLIE. A helical membrane pass occupies residues 63–82; it reads MIWTILPAIILLFIAMPSLR. The Mitochondrial intermembrane portion of the chain corresponds to 83–229; sequence LLYLLDEINE…IKWISNSVNS (147 aa). Cu cation is bound by residues H161, C196, E198, C200, H204, and M207. Residue E198 participates in Mg(2+) binding.

The protein belongs to the cytochrome c oxidase subunit 2 family. Component of the cytochrome c oxidase (complex IV, CIV), a multisubunit enzyme composed of a catalytic core of 3 subunits and several supernumerary subunits. The complex exists as a monomer or a dimer and forms supercomplexes (SCs) in the inner mitochondrial membrane with ubiquinol-cytochrome c oxidoreductase (cytochrome b-c1 complex, complex III, CIII). Requires Cu cation as cofactor.

It is found in the mitochondrion inner membrane. The enzyme catalyses 4 Fe(II)-[cytochrome c] + O2 + 8 H(+)(in) = 4 Fe(III)-[cytochrome c] + 2 H2O + 4 H(+)(out). In terms of biological role, component of the cytochrome c oxidase, the last enzyme in the mitochondrial electron transport chain which drives oxidative phosphorylation. The respiratory chain contains 3 multisubunit complexes succinate dehydrogenase (complex II, CII), ubiquinol-cytochrome c oxidoreductase (cytochrome b-c1 complex, complex III, CIII) and cytochrome c oxidase (complex IV, CIV), that cooperate to transfer electrons derived from NADH and succinate to molecular oxygen, creating an electrochemical gradient over the inner membrane that drives transmembrane transport and the ATP synthase. Cytochrome c oxidase is the component of the respiratory chain that catalyzes the reduction of oxygen to water. Electrons originating from reduced cytochrome c in the intermembrane space (IMS) are transferred via the dinuclear copper A center (CU(A)) of subunit 2 and heme A of subunit 1 to the active site in subunit 1, a binuclear center (BNC) formed by heme A3 and copper B (CU(B)). The BNC reduces molecular oxygen to 2 water molecules using 4 electrons from cytochrome c in the IMS and 4 protons from the mitochondrial matrix. This chain is Cytochrome c oxidase subunit 2 (mt:CoII), found in Drosophila miranda (Fruit fly).